The primary structure comprises 181 residues: ATP synthase subunit delta (181 aa).

It belongs to the ATPase delta chain family. F-type ATPases have 2 components, F(1) - the catalytic core - and F(0) - the membrane proton channel. F(1) has five subunits: alpha(3), beta(3), gamma(1), delta(1), epsilon(1). F(0) has three main subunits: a(1), b(2) and c(10-14). The alpha and beta chains form an alternating ring which encloses part of the gamma chain. F(1) is attached to F(0) by a central stalk formed by the gamma and epsilon chains, while a peripheral stalk is formed by the delta and b chains.

The protein localises to the cell inner membrane. Functionally, f(1)F(0) ATP synthase produces ATP from ADP in the presence of a proton or sodium gradient. F-type ATPases consist of two structural domains, F(1) containing the extramembraneous catalytic core and F(0) containing the membrane proton channel, linked together by a central stalk and a peripheral stalk. During catalysis, ATP synthesis in the catalytic domain of F(1) is coupled via a rotary mechanism of the central stalk subunits to proton translocation. Its function is as follows. This protein is part of the stalk that links CF(0) to CF(1). It either transmits conformational changes from CF(0) to CF(1) or is implicated in proton conduction. In Chlorobium luteolum (strain DSM 273 / BCRC 81028 / 2530) (Pelodictyon luteolum), this protein is ATP synthase subunit delta.